The chain runs to 510 residues: Arginine biosynthesis bifunctional protein ArgJ, mitochondrial (510 aa).

Polar residues predominate over residues 57–70 (TSTNEPSAATTNVP). The disordered stretch occupies residues 57-76 (TSTNEPSAATTNVPHPQEAP). The substrate site is built by threonine 222, lysine 248, threonine 267, and glutamate 364. Threonine 267 functions as the Nucleophile in the catalytic mechanism.

This sequence belongs to the ArgJ family. Heterodimer of an alpha and a beta chain. In terms of processing, the alpha and beta chains are autoproteolytically processed from a single precursor protein within the mitochondrion.

Its subcellular location is the mitochondrion matrix. It carries out the reaction N(2)-acetyl-L-ornithine + L-glutamate = N-acetyl-L-glutamate + L-ornithine. It catalyses the reaction L-glutamate + acetyl-CoA = N-acetyl-L-glutamate + CoA + H(+). It participates in amino-acid biosynthesis; L-arginine biosynthesis; L-ornithine and N-acetyl-L-glutamate from L-glutamate and N(2)-acetyl-L-ornithine (cyclic): step 1/1. It functions in the pathway amino-acid biosynthesis; L-arginine biosynthesis; N(2)-acetyl-L-ornithine from L-glutamate: step 1/4. Catalyzes two activities which are involved in the cyclic version of arginine biosynthesis: the synthesis of acetylglutamate from glutamate and acetyl-CoA, and of ornithine by transacetylation between acetylornithine and glutamate. The chain is Arginine biosynthesis bifunctional protein ArgJ, mitochondrial from Malassezia globosa (strain ATCC MYA-4612 / CBS 7966) (Dandruff-associated fungus).